Consider the following 136-residue polypeptide: MIFINKGTKHFFYKKKLYIFNVIKFSKFNKFYLNFIINKILLICYSKGKGFQGVVKRWNFKTKDKSHGNSLSYRTLGSTGQCQDPGRVFKKKKMPGRMGNKKFSLFVNIFFRKKNYFFLKKILPGVKNDILLGKIL.

An N5-methylglutamine modification is found at Q83.

The protein belongs to the universal ribosomal protein uL3 family. Part of the 50S ribosomal subunit. Forms a cluster with proteins L14 and L19. Methylated by PrmB.

In terms of biological role, one of the primary rRNA binding proteins, it binds directly near the 3'-end of the 23S rRNA, where it nucleates assembly of the 50S subunit. This chain is Large ribosomal subunit protein uL3 (rplC), found in Carsonella ruddii.